The following is a 663-amino-acid chain: Transketolase 1 (663 aa).

A substrate-binding site is contributed by His26. N6-acetyllysine is present on Lys46. Thiamine diphosphate is bound by residues His66 and 114–116; that span reads GPL. Asp155 lines the Mg(2+) pocket. Residues Gly156 and Asn185 each contribute to the thiamine diphosphate site. 2 residues coordinate Mg(2+): Asn185 and Ile187. Substrate is bound by residues His261, Arg358, and Ser385. His261 lines the thiamine diphosphate pocket. Catalysis depends on Glu411, which acts as the Proton donor. Residue Phe437 participates in thiamine diphosphate binding. Substrate contacts are provided by His461, Asp469, His473, and Arg520.

It belongs to the transketolase family. Homodimer. The cofactor is Mg(2+). It depends on Ca(2+) as a cofactor. Mn(2+) serves as cofactor. Requires Co(2+) as cofactor. Thiamine diphosphate is required as a cofactor.

The enzyme catalyses D-sedoheptulose 7-phosphate + D-glyceraldehyde 3-phosphate = aldehydo-D-ribose 5-phosphate + D-xylulose 5-phosphate. Functionally, catalyzes the transfer of a two-carbon ketol group from a ketose donor to an aldose acceptor, via a covalent intermediate with the cofactor thiamine pyrophosphate. Thus, catalyzes the reversible transfer of a two-carbon ketol group from sedoheptulose-7-phosphate to glyceraldehyde-3-phosphate, producing xylulose-5-phosphate and ribose-5-phosphate. The protein is Transketolase 1 (tktA) of Escherichia coli (strain K12).